Reading from the N-terminus, the 361-residue chain is Putative F-box protein At3g25460 (361 aa).

Positions 1–45 constitute an F-box domain; sequence MMMPELPEDLLVEILCRVPATSLKRLRSTCKLWNHLYNDKRFKSK.

The protein is Putative F-box protein At3g25460 of Arabidopsis thaliana (Mouse-ear cress).